The primary structure comprises 409 residues: Immediate early response gene 5-like protein (409 aa).

Disordered regions lie at residues 168–237 and 312–335; these read QPPH…PSSS and GQEEEDDEEEDAGDLGAEPPGGTP. Over residues 184 to 195 the composition is skewed to pro residues; it reads QPGPAPLPPPAP. Low complexity-rich tracts occupy residues 196–212 and 220–237; these read AALCPRDPRVPAACSAP and PPTVAASSPPASPAPSSS. A compositionally biased stretch (acidic residues) spans 313–324; that stretch reads QEEEDDEEEDAG.

It belongs to the IER family.

The polypeptide is Immediate early response gene 5-like protein (Ier5l) (Rattus norvegicus (Rat)).